Consider the following 338-residue polypeptide: Ketol-acid reductoisomerase (NADP(+)) (338 aa).

Residues 1–181 enclose the KARI N-terminal Rossmann domain; sequence MKVYYDKDAD…GGTRGGVIET (181 aa). NADP(+)-binding positions include 24 to 27, Arg-47, and Ser-52; that span reads YGSQ. Residue His-107 is part of the active site. Position 133 (Gly-133) interacts with NADP(+). The KARI C-terminal knotted domain occupies 182–327; sequence TFKEETETDL…SRLRDMMPWI (146 aa). The Mg(2+) site is built by Asp-190, Glu-194, Glu-226, and Glu-230. Residue Ser-251 participates in substrate binding.

The protein belongs to the ketol-acid reductoisomerase family. Mg(2+) is required as a cofactor.

The catalysed reaction is (2R)-2,3-dihydroxy-3-methylbutanoate + NADP(+) = (2S)-2-acetolactate + NADPH + H(+). It catalyses the reaction (2R,3R)-2,3-dihydroxy-3-methylpentanoate + NADP(+) = (S)-2-ethyl-2-hydroxy-3-oxobutanoate + NADPH + H(+). Its pathway is amino-acid biosynthesis; L-isoleucine biosynthesis; L-isoleucine from 2-oxobutanoate: step 2/4. It participates in amino-acid biosynthesis; L-valine biosynthesis; L-valine from pyruvate: step 2/4. In terms of biological role, involved in the biosynthesis of branched-chain amino acids (BCAA). Catalyzes an alkyl-migration followed by a ketol-acid reduction of (S)-2-acetolactate (S2AL) to yield (R)-2,3-dihydroxy-isovalerate. In the isomerase reaction, S2AL is rearranged via a Mg-dependent methyl migration to produce 3-hydroxy-3-methyl-2-ketobutyrate (HMKB). In the reductase reaction, this 2-ketoacid undergoes a metal-dependent reduction by NADPH to yield (R)-2,3-dihydroxy-isovalerate. The sequence is that of Ketol-acid reductoisomerase (NADP(+)) from Nitrosomonas eutropha (strain DSM 101675 / C91 / Nm57).